Here is a 331-residue protein sequence, read N- to C-terminus: Olfactory receptor 6S1 (331 aa).

Residues 1–29 (MSPDGNHSSDPTEFVLAGLPNLNSARVEL) are Extracellular-facing. Residue N6 is glycosylated (N-linked (GlcNAc...) asparagine). A helical transmembrane segment spans residues 30–50 (FSVFLLVYLLNLTGNVLIVGV). At 51-59 (VRADTRLQT) the chain is on the cytoplasmic side. Residues 60 to 80 (PMYFFLGNLSCLEILLTSVII) form a helical membrane-spanning segment. At 81 to 99 (PKMLSNFLSRQHTISFAAC) the chain is on the extracellular side. C99 and C182 are disulfide-bonded. A helical transmembrane segment spans residues 100-120 (ITQFYFYFFLGASEFLLLAVM). At 121-147 (SADRYLAICHPLRYPLLMSGAVCFRVA) the chain is on the cytoplasmic side. The helical transmembrane segment at 148-168 (LACWVGGLVPVLGPTVAVALL) threads the bilayer. Residues 169-207 (PFCKQGAVVQHFFCDSGPLLRLACTNTKKLEETDFVLAS) are Extracellular-facing. The chain crosses the membrane as a helical span at residues 208–228 (LVIVSSLLITAVSYGLIVLAV). The Cytoplasmic portion of the chain corresponds to 229 to 242 (LSIPSASGRQKAFS). A helical transmembrane segment spans residues 243–263 (TCTSHLIVVTLFYGSAIFLYV). Residues 264 to 274 (RPSQSGSVDTN) are Extracellular-facing. Residues 275-295 (WAVTVITTFVTPLLNPFIYAL) traverse the membrane as a helical segment. The Cytoplasmic segment spans residues 296-331 (RNEQVKEALKDMFRKVVAGVLGNLLLDKCLSEKAVK).

The protein belongs to the G-protein coupled receptor 1 family.

The protein localises to the cell membrane. Odorant receptor. This Homo sapiens (Human) protein is Olfactory receptor 6S1 (OR6S1).